Here is a 178-residue protein sequence, read N- to C-terminus: Fatty-acid and retinol-binding protein 1 (178 aa).

Positions 1–16 are cleaved as a signal peptide; sequence MYHQLILLALIGTIMA. Coiled coils occupy residues 67-89 and 129-154; these read DAAL…ELRN and IKQA…LKVT.

The protein belongs to the fatty-acid and retinol-binding protein (FARBP) family. Post-translationally, not glycosylated.

The protein localises to the secreted. Its function is as follows. Binds retinol and different fatty acids. The chain is Fatty-acid and retinol-binding protein 1 from Loa loa (Eye worm).